The following is a 67-amino-acid chain: MAKERACRHCHYITTEDRCPVCGSRDLSDDWFDLVIVLDVESRIAKKLRESIPEAAKVPGKYAIRVR.

4 residues coordinate Zn(2+): cysteine 7, cysteine 10, cysteine 19, and cysteine 22.

It belongs to the archaeal Spt4 family. As to quaternary structure, heterodimer composed of Spt4 and Spt5. Interacts with RNA polymerase (RNAP). The complex interacts with FttA.

It localises to the chromosome. Functionally, the Stp4-Spt5 complex stimulates transcription elongation on both naked DNA and histone-bound DNA (chromatin), facilitating transcription through the histone barrier. Neither protein functions alone. The complex also stimulates the transcription termination activity of FttA, neither protein alone stimulates FttA-dependent termination. The sequence is that of Transcription elongation factor Spt4 from Thermococcus kodakarensis (strain ATCC BAA-918 / JCM 12380 / KOD1) (Pyrococcus kodakaraensis (strain KOD1)).